The sequence spans 382 residues: Mating-type protein a-1 (382 aa).

Positions 116–184 (IPRPPNAYIL…RLLLENPDYR (69 aa)) form a DNA-binding region, HMG box.

Binds in vitro to DNA containing a specific core sequence 5'-CTTTG-3'.

Its subcellular location is the nucleus. Its function is as follows. Mating type proteins are sequence specific DNA-binding proteins that act as master switches in yeast differentiation by controlling gene expression in a cell type-specific fashion. Transcriptional activator that induces the transcription of a-specific genes like mating factor mfa-1. Required for mating as an a-cell, blocking of heterokaryon formation (vegetative incompatibility) and for perithecium induction. The chain is Mating-type protein a-1 (mta-1) from Neurospora crassa.